A 393-amino-acid polypeptide reads, in one-letter code: S-adenosylmethionine synthase 2 (393 aa).

Glu-9 provides a ligand contact to Mg(2+). An ATP-binding site is contributed by His-15. Position 43 (Glu-43) interacts with K(+). L-methionine-binding residues include Glu-56 and Gln-99. ATP contacts are provided by residues 167–169 (DGK), 235–238 (SGRF), Asp-246, 252–253 (RK), Ala-269, Lys-273, and Lys-277. Asp-246 is an L-methionine binding site. Residue Lys-277 coordinates L-methionine.

The protein belongs to the AdoMet synthase family. As to quaternary structure, homotetramer. The cofactor is Mn(2+). Requires Mg(2+) as cofactor. Co(2+) is required as a cofactor. It depends on K(+) as a cofactor.

Its subcellular location is the cytoplasm. The enzyme catalyses L-methionine + ATP + H2O = S-adenosyl-L-methionine + phosphate + diphosphate. It participates in amino-acid biosynthesis; S-adenosyl-L-methionine biosynthesis; S-adenosyl-L-methionine from L-methionine: step 1/1. Catalyzes the formation of S-adenosylmethionine from methionine and ATP. The reaction comprises two steps that are both catalyzed by the same enzyme: formation of S-adenosylmethionine (AdoMet) and triphosphate, and subsequent hydrolysis of the triphosphate. The polypeptide is S-adenosylmethionine synthase 2 (SAMS2) (Elaeagnus umbellata (Autumn olive)).